The following is a 24-amino-acid chain: Superoxide dismutase [Cu-Zn], chloroplastic (24 aa).

Belongs to the Cu-Zn superoxide dismutase family. Homodimer. It depends on Cu cation as a cofactor. Zn(2+) serves as cofactor.

The protein resides in the plastid. Its subcellular location is the chloroplast. It catalyses the reaction 2 superoxide + 2 H(+) = H2O2 + O2. Its function is as follows. Destroys radicals which are normally produced within the cells and which are toxic to biological systems. This is Superoxide dismutase [Cu-Zn], chloroplastic from Picea abies (Norway spruce).